The sequence spans 178 residues: Signal peptidase complex subunit 2 (178 aa).

The Cytoplasmic portion of the chain corresponds to 1–37 (MSSAKPINVYSIPELNQALDEALPSVFARLNYERSYA). The chain crosses the membrane as a helical span at residues 38-58 (LLDAKLYIGYSIAVVAGLSFF). The Lumenal portion of the chain corresponds to 59–67 (LDKKFERDQ). A helical membrane pass occupies residues 68-88 (IVTYQKLLVGAYFVLSLLFWY). The Cytoplasmic segment spans residues 89 to 178 (FSRFIEKGTV…HNVLDTKKNE (90 aa)).

It belongs to the SPCS2 family. In terms of assembly, component of the signal peptidase complex (SPC) composed of a catalytic subunit SEC11 and three accessory subunits SPC1, SPC2 and SPC3. The complex induces a local thinning of the ER membrane which is used to measure the length of the signal peptide (SP) h-region of protein substrates. This ensures the selectivity of the complex towards h-regions shorter than 18-20 amino acids. SPC associates with the translocon complex. Interacts with SBH1 and SEB2/SBH2.

It is found in the endoplasmic reticulum membrane. Component of the signal peptidase complex (SPC) which catalyzes the cleavage of N-terminal signal sequences from nascent proteins as they are translocated into the lumen of the endoplasmic reticulum. Enhances the enzymatic activity of SPC and facilitates the interactions between different components of the translocation site. This chain is Signal peptidase complex subunit 2 (SPC2), found in Saccharomyces cerevisiae (strain ATCC 204508 / S288c) (Baker's yeast).